A 372-amino-acid polypeptide reads, in one-letter code: Glutamine synthetase (372 aa).

One can recognise a GS beta-grasp domain in the interval Ile-26 to Gly-105. One can recognise a GS catalytic domain in the interval His-112 to Leu-372.

This sequence belongs to the glutamine synthetase family. Homooctamer.

It localises to the cytoplasm. It catalyses the reaction L-glutamate + NH4(+) + ATP = L-glutamine + ADP + phosphate + H(+). The sequence is that of Glutamine synthetase (GLN1) from Kluyveromyces lactis (strain ATCC 8585 / CBS 2359 / DSM 70799 / NBRC 1267 / NRRL Y-1140 / WM37) (Yeast).